Reading from the N-terminus, the 366-residue chain is Ribosomal RNA large subunit methyltransferase M (366 aa).

Residues serine 188, 221–224 (CPGG), aspartate 240, aspartate 260, and aspartate 277 contribute to the S-adenosyl-L-methionine site. Lysine 306 (proton acceptor) is an active-site residue.

The protein belongs to the class I-like SAM-binding methyltransferase superfamily. RNA methyltransferase RlmE family. RlmM subfamily. Monomer.

The protein localises to the cytoplasm. It carries out the reaction cytidine(2498) in 23S rRNA + S-adenosyl-L-methionine = 2'-O-methylcytidine(2498) in 23S rRNA + S-adenosyl-L-homocysteine + H(+). Functionally, catalyzes the 2'-O-methylation at nucleotide C2498 in 23S rRNA. The protein is Ribosomal RNA large subunit methyltransferase M of Escherichia fergusonii (strain ATCC 35469 / DSM 13698 / CCUG 18766 / IAM 14443 / JCM 21226 / LMG 7866 / NBRC 102419 / NCTC 12128 / CDC 0568-73).